A 204-amino-acid polypeptide reads, in one-letter code: MTIHYPNGQQPVQHYNTHNELPTPHQSIYAKRGMSLEDEINHSNQYYLARHIAVIHKKPTPIQLVKVDYPKRSAAVIKEAYFRRPSTTDYNGVYRGYYIDFDAKETRNKNSFPLKNFHPHQIQHMRECVAQGGICFAFIKFTELDLLYLLPASNLFKYWDQQQNGGRKSILRTDIAKEGYQIHYQLNPRLPYLNAVDKIIAAKA.

The interval 1 to 24 is disordered; it reads MTIHYPNGQQPVQHYNTHNELPTP. The segment covering 7–24 has biased composition (polar residues); the sequence is NGQQPVQHYNTHNELPTP. Threonine 87, aspartate 89, aspartate 102, and glutamine 121 together coordinate Mg(2+).

This sequence belongs to the RecU family. The cofactor is Mg(2+).

It localises to the cytoplasm. It catalyses the reaction Endonucleolytic cleavage at a junction such as a reciprocal single-stranded crossover between two homologous DNA duplexes (Holliday junction).. Endonuclease that resolves Holliday junction intermediates in genetic recombination. Cleaves mobile four-strand junctions by introducing symmetrical nicks in paired strands. Promotes annealing of linear ssDNA with homologous dsDNA. Required for DNA repair, homologous recombination and chromosome segregation. The chain is Holliday junction resolvase RecU from Limosilactobacillus reuteri (strain DSM 20016) (Lactobacillus reuteri).